Here is a 321-residue protein sequence, read N- to C-terminus: Nucleus-vacuole junction protein 1 (321 aa).

An N-terminal signal peptide occupies residues 1–22; it reads MTRPPLVRGIFSLGLSVAVLKG. Residues 73–125 are TSC13-binding; that stretch reads ELSWRKVFNFISRQSSELDARIYVLILLLSFLLPIAWTVLDGDRETTLEDKDN. The chain crosses the membrane as a helical span at residues 94–114; the sequence is IYVLILLLSFLLPIAWTVLDG. Positions 139-195 are OSH1-binding; it reads KHYNDGERAVLQFGKNRSEPIILSYKDMNVLEGEHEFTSKEEHSNSHLTSKSENALS. S156 bears the Phosphoserine mark. A compositionally biased stretch (basic and acidic residues) spans 174–183; sequence EFTSKEEHSN. Residues 174–194 are disordered; it reads EFTSKEEHSNSHLTSKSENAL. The span at 184 to 194 shows a compositional bias: polar residues; it reads SHLTSKSENAL. The residue at position 199 (S199) is a Phosphoserine. A disordered region spans residues 210–275; the sequence is QLEEDKNEPN…SLKSSTSFPI (66 aa). Residues 233-321 form a VAC8-binding region; it reads DCSSSSEVES…EQAYSQPFRY (89 aa). A compositionally biased stretch (basic and acidic residues) spans 242-262; sequence SQSKCRKESTAEPDSLSRDTR. Residues 263–272 are compositionally biased toward low complexity; the sequence is TTSSLKSSTS. A phosphoserine mark is found at S285 and S298. The segment at 299 to 321 is disordered; it reads PTKSSNLDAQVNTEQAYSQPFRY.

In terms of assembly, interacts with OSH1, TSC13 and VAC8.

It is found in the nucleus outer membrane. In terms of biological role, involved in the formation of nucleus-vacuole (NV) junctions during piecemeal microautophagy of the nucleus (PMN). NV junctions are interorganelle interfaces mediated by NVJ1 in the nuclear envelope and VAC8 on the vacuole membrane. Together, NVJ1 and VAC8 form Velcro-like patches through which teardrop-like portions of the nucleus are pinched off into the vacuolar lumen and degraded by the PMN process. Also acts as an outer-nuclear membrane receptor for OSH1 and TSC13. This is Nucleus-vacuole junction protein 1 (NVJ1) from Saccharomyces cerevisiae (strain YJM789) (Baker's yeast).